Here is a 297-residue protein sequence, read N- to C-terminus: tRNA-cytidine(32) 2-sulfurtransferase (297 aa).

A PP-loop motif motif is present at residues 45 to 50 (SGGKDS). [4Fe-4S] cluster contacts are provided by cysteine 120, cysteine 123, and cysteine 211.

It belongs to the TtcA family. Homodimer. Requires Mg(2+) as cofactor. It depends on [4Fe-4S] cluster as a cofactor.

It localises to the cytoplasm. The enzyme catalyses cytidine(32) in tRNA + S-sulfanyl-L-cysteinyl-[cysteine desulfurase] + AH2 + ATP = 2-thiocytidine(32) in tRNA + L-cysteinyl-[cysteine desulfurase] + A + AMP + diphosphate + H(+). The protein operates within tRNA modification. Catalyzes the ATP-dependent 2-thiolation of cytidine in position 32 of tRNA, to form 2-thiocytidine (s(2)C32). The sulfur atoms are provided by the cysteine/cysteine desulfurase (IscS) system. In Vibrio parahaemolyticus serotype O3:K6 (strain RIMD 2210633), this protein is tRNA-cytidine(32) 2-sulfurtransferase.